Consider the following 439-residue polypeptide: Ribosomal protein uS12 methylthiotransferase RimO (439 aa).

Residues 3-115 enclose the MTTase N-terminal domain; that stretch reads KKLHLISLGC…IDQMVRERQG (113 aa). The [4Fe-4S] cluster site is built by Cys12, Cys46, Cys78, Cys147, Cys151, and Cys154. One can recognise a Radical SAM core domain in the interval 133–362; the sequence is TGSSVHAYVK…DKIIQKQHRA (230 aa).

This sequence belongs to the methylthiotransferase family. RimO subfamily. The cofactor is [4Fe-4S] cluster.

It localises to the cytoplasm. The catalysed reaction is L-aspartate(89)-[ribosomal protein uS12]-hydrogen + (sulfur carrier)-SH + AH2 + 2 S-adenosyl-L-methionine = 3-methylsulfanyl-L-aspartate(89)-[ribosomal protein uS12]-hydrogen + (sulfur carrier)-H + 5'-deoxyadenosine + L-methionine + A + S-adenosyl-L-homocysteine + 2 H(+). Its function is as follows. Catalyzes the methylthiolation of an aspartic acid residue of ribosomal protein uS12. The protein is Ribosomal protein uS12 methylthiotransferase RimO of Wolinella succinogenes (strain ATCC 29543 / DSM 1740 / CCUG 13145 / JCM 31913 / LMG 7466 / NCTC 11488 / FDC 602W) (Vibrio succinogenes).